Consider the following 353-residue polypeptide: Protein RecA (353 aa).

67 to 74 (GPESSGKT) is an ATP binding site.

This sequence belongs to the RecA family.

The protein localises to the cytoplasm. Its function is as follows. Can catalyze the hydrolysis of ATP in the presence of single-stranded DNA, the ATP-dependent uptake of single-stranded DNA by duplex DNA, and the ATP-dependent hybridization of homologous single-stranded DNAs. It interacts with LexA causing its activation and leading to its autocatalytic cleavage. This chain is Protein RecA, found in Shewanella sediminis (strain HAW-EB3).